A 538-amino-acid polypeptide reads, in one-letter code: MVELVISPSLTVNSDCLDKLKFNRADAAVWTLSDRQGITKSAPLRVSQLFSRSCPRVLPRQPSTAMAAYGQTQYSAGIQQATPYTAYPPPAQAYGIPSYSIKTEDSLNHSPGQSGFLSYGSSFSTSPTGQSPYTYQMHGTTGFYQGGNGLGNAAGFGSVHQDYPSYPGFPQSQYPQYYGSSYNPPYVPASSICPSPLSTSTYVLQEASHNVPNQSSESLAGEYNTHNGPSTPAKEGDTDRPHRASDGKLRGRSKRSSDPSPAGDNEIERVFVWDLDETIIIFHSLLTGTFASRYGKDTTTSVRIGLMMEEMIFNLADTHLFFNDLEDCDQIHVDDVSSDDNGQDLSTYNFSADGFHSSAPGANLCLGSGVHGGVDWMRKLAFRYRRVKEMYNTYKNNVGGLIGTPKRETWLQLRAELEALTDLWLTHSLKALNLINSRPNCVNVLVTTTQLIPALAKVLLYGLGSVFPIENIYSATKTGKESCFERIMQRFGRKAVYVVIGDGVEEEQGAKKHNMPFWRISCHADLEALRHALELEYL.

Residues 209–230 (HNVPNQSSESLAGEYNTHNGPS) are compositionally biased toward polar residues. The disordered stretch occupies residues 209-263 (HNVPNQSSESLAGEYNTHNGPSTPAKEGDTDRPHRASDGKLRGRSKRSSDPSPAG). The span at 234-249 (KEGDTDRPHRASDGKL) shows a compositional bias: basic and acidic residues. The active-site Nucleophile is aspartate 274. 3 residues coordinate Mg(2+): aspartate 274, aspartate 276, and aspartate 502. The active-site Proton donor is the aspartate 276.

It belongs to the HAD-like hydrolase superfamily. EYA family. As to quaternary structure, interacts with DACH2 and SIX1, and probably with SIX2, SIX4 and SIX5. Interacts with CAPN8. Interacts with GNAZ and GNAI2; this precludes interaction with SIX1. The cofactor is Mg(2+). In terms of tissue distribution, highest expression in muscle with lower levels in kidney, placenta, pancreas, brain and heart.

The protein resides in the cytoplasm. The protein localises to the nucleus. It catalyses the reaction O-phospho-L-tyrosyl-[protein] + H2O = L-tyrosyl-[protein] + phosphate. In terms of biological role, functions both as protein phosphatase and as transcriptional coactivator for SIX1, and probably also for SIX2, SIX4 and SIX5. Tyrosine phosphatase that dephosphorylates 'Tyr-142' of histone H2AX (H2AXY142ph) and promotes efficient DNA repair via the recruitment of DNA repair complexes containing MDC1. 'Tyr-142' phosphorylation of histone H2AX plays a central role in DNA repair and acts as a mark that distinguishes between apoptotic and repair responses to genotoxic stress. Its function as histone phosphatase may contribute to its function in transcription regulation during organogenesis. Plays an important role in hypaxial muscle development together with SIX1 and DACH2; in this it is functionally redundant with EYA1. The protein is Protein phosphatase EYA2 (EYA2) of Homo sapiens (Human).